A 286-amino-acid polypeptide reads, in one-letter code: Deaminated glutathione amidase (286 aa).

In terms of domain architecture, CN hydrolase spans 4 to 252 (ANVALLQLCS…VSALKVKIET (249 aa)). E42 (proton acceptor) is an active-site residue. K115 is an active-site residue. Catalysis depends on C157, which acts as the Nucleophile.

It belongs to the carbon-nitrogen hydrolase superfamily. NIT1/NIT2 family.

The enzyme catalyses N-(4-oxoglutaryl)-L-cysteinylglycine + H2O = L-cysteinylglycine + 2-oxoglutarate. Its function is as follows. Hydrolyzes deaminated glutathione (dGSH, 2-oxoglutaramate) to alpha-ketoglutarate (alpha-KG) and cysteinylglycine (specific activity 6.50 umol/min/mg), has less activity against alpha-ketoglutaramate (a-KGM, specific activity 0.20 umol/min/mg), very little activity on glutathione and none on L-glutamine. May function as a metabolite repair enzyme. The sequence is that of Deaminated glutathione amidase from Yersinia enterocolitica.